The primary structure comprises 326 residues: Adenosine receptor A1 (326 aa).

Topologically, residues 1–10 (MPPAISAFQA) are extracellular. The helical transmembrane segment at 11–33 (AYIGIEVLIALVSVPGNVLVIWA) threads the bilayer. The Cytoplasmic segment spans residues 34–46 (VKVNQALRDATFC). The chain crosses the membrane as a helical span at residues 47-69 (FIVSLAVADVAVGALVIPLAILI). The Extracellular portion of the chain corresponds to 70-80 (NIGPRTYFHTC). The cysteines at positions 80 and 169 are disulfide-linked. Residues 81 to 102 (LMVACPVLILTQSSILALLAIA) traverse the membrane as a helical segment. At 103–123 (VDRYLRVKIPLRYKTVVTPRR) the chain is on the cytoplasmic side. The chain crosses the membrane as a helical span at residues 124–146 (AAVAIAGCWILSFVVGLTPLFGW). Residues 147 to 176 (NRLGEAQRAWAANGSGGEPVIKCEFEKVIS) lie on the Extracellular side of the membrane. Asn-159 carries N-linked (GlcNAc...) asparagine glycosylation. The chain crosses the membrane as a helical span at residues 177-201 (MEYMVYFNFFVWVLPPLLLMVLIYL). At 202–235 (EVFYLIRRQLGKKVSASSGDPQKYYGKELKIAKS) the chain is on the cytoplasmic side. A helical membrane pass occupies residues 236 to 259 (LALILFLFALSWLPLHILNCITLF). Topologically, residues 260-267 (CPSCRKPS) are extracellular. A helical transmembrane segment spans residues 268–292 (ILMYIAIFLTHGNSAMNPIVYAFRI). Residues 293–326 (QKFRVTFLKIWNDHFRCQPTPPVDEDPPEEAPHD) lie on the Cytoplasmic side of the membrane. Cys-309 carries the S-palmitoyl cysteine lipid modification.

It belongs to the G-protein coupled receptor 1 family.

It is found in the cell membrane. Functionally, receptor for adenosine. The activity of this receptor is mediated by G proteins which inhibit adenylyl cyclase. The chain is Adenosine receptor A1 (ADORA1) from Canis lupus familiaris (Dog).